The following is a 631-amino-acid chain: KIF-binding protein (631 aa).

Acidic residues predominate over residues 60 to 70; the sequence is EQGEAGDEADC. A disordered region spans residues 60–88; it reads EQGEAGDEADCESSQTADGEPEDGFEKTF.

This sequence belongs to the KIF-binding protein family. In terms of tissue distribution, at 30 hpf, primarily expressed in central and peripheral neurons.

It is found in the cytoplasm. The protein localises to the cytoskeleton. Activator of KIF1B plus-end-directed microtubule motor activity. Required for organization of axonal microtubules, and axonal outgrowth and maintenance during peripheral and central nervous system development. This is KIF-binding protein (kifbp) from Danio rerio (Zebrafish).